The chain runs to 381 residues: Protein-glutamate methylesterase/protein-glutamine glutaminase 1 (381 aa).

The region spanning Arg14–Ser132 is the Response regulatory domain. Asp65 carries the post-translational modification 4-aspartylphosphate. Residues Gln143–Val173 form a disordered region. Positions Ala144 to Arg153 are enriched in low complexity. The region spanning Pro188–Arg381 is the CheB-type methylesterase domain. Catalysis depends on residues Ser199, His227, and Asp323.

Belongs to the CheB family. Phosphorylated by CheA. Phosphorylation of the N-terminal regulatory domain activates the methylesterase activity.

It localises to the cytoplasm. It carries out the reaction [protein]-L-glutamate 5-O-methyl ester + H2O = L-glutamyl-[protein] + methanol + H(+). It catalyses the reaction L-glutaminyl-[protein] + H2O = L-glutamyl-[protein] + NH4(+). Its function is as follows. Involved in chemotaxis. Part of a chemotaxis signal transduction system that modulates chemotaxis in response to various stimuli. Catalyzes the demethylation of specific methylglutamate residues introduced into the chemoreceptors (methyl-accepting chemotaxis proteins or MCP) by CheR. Also mediates the irreversible deamidation of specific glutamine residues to glutamic acid. The polypeptide is Protein-glutamate methylesterase/protein-glutamine glutaminase 1 (Paramagnetospirillum magneticum (strain ATCC 700264 / AMB-1) (Magnetospirillum magneticum)).